A 350-amino-acid polypeptide reads, in one-letter code: ADP-ribose pyrophosphatase, mitochondrial (350 aa).

Residues 1–46 (MAGRSLGKAVATVSLSVALASVTVRSSGCRAIPAPRNPFPSCGFHL) constitute a mitochondrion transit peptide. Disordered regions lie at residues 53–77 (GSNG…KVER) and 116–153 (SESS…PAGR). The residue at position 121 (serine 121) is a Phosphoserine. The segment covering 124 to 135 (FNEKDGHVERKS) has biased composition (basic and acidic residues). One can recognise a Nudix hydrolase domain in the interval 178–334 (WKRDESGNKI…SQFIKLVAEK (157 aa)). A Nudix box motif is present at residues 215–237 (GMVDPGEKISATLKREFGEEALN).

This sequence belongs to the Nudix hydrolase family. NudF subfamily. As to quaternary structure, monomer. Interacts with GLOD4. Requires Mg(2+) as cofactor. Mn(2+) is required as a cofactor.

Its subcellular location is the mitochondrion. It catalyses the reaction ADP-D-ribose + H2O = D-ribose 5-phosphate + AMP + 2 H(+). Hydrolyzes ADP-ribose (ADPR) to AMP and ribose 5'-phosphate. The protein is ADP-ribose pyrophosphatase, mitochondrial (Nudt9) of Rattus norvegicus (Rat).